The chain runs to 125 residues: MAITKEDILNAVAEMSVMDVCDLVKMMEDKFGVSAAAAVAVAAGPVAGPAEAAEEKTEFDVVLVDAGSNKIAAIKAVRGATGLGLKEAKDAVEGTPFTVKEAASKEEAEALKKQLEEAGAKVELK.

Belongs to the bacterial ribosomal protein bL12 family. In terms of assembly, homodimer. Part of the ribosomal stalk of the 50S ribosomal subunit. Forms a multimeric L10(L12)X complex, where L10 forms an elongated spine to which 2 to 4 L12 dimers bind in a sequential fashion. Binds GTP-bound translation factors.

In terms of biological role, forms part of the ribosomal stalk which helps the ribosome interact with GTP-bound translation factors. Is thus essential for accurate translation. This Francisella tularensis subsp. novicida (strain U112) protein is Large ribosomal subunit protein bL12.